The chain runs to 224 residues: Pyridoxal 5'-phosphate synthase subunit PdxT (224 aa).

Glycine 55–serine 57 provides a ligand contact to L-glutamine. The active-site Nucleophile is the cysteine 87. Residues arginine 113 and isoleucine 142–arginine 143 each bind L-glutamine. Catalysis depends on charge relay system residues histidine 178 and glutamate 180.

It belongs to the glutaminase PdxT/SNO family. In terms of assembly, in the presence of PdxS, forms a dodecamer of heterodimers. Only shows activity in the heterodimer.

The enzyme catalyses aldehydo-D-ribose 5-phosphate + D-glyceraldehyde 3-phosphate + L-glutamine = pyridoxal 5'-phosphate + L-glutamate + phosphate + 3 H2O + H(+). It carries out the reaction L-glutamine + H2O = L-glutamate + NH4(+). It functions in the pathway cofactor biosynthesis; pyridoxal 5'-phosphate biosynthesis. Its function is as follows. Catalyzes the hydrolysis of glutamine to glutamate and ammonia as part of the biosynthesis of pyridoxal 5'-phosphate. The resulting ammonia molecule is channeled to the active site of PdxS. The chain is Pyridoxal 5'-phosphate synthase subunit PdxT from Syntrophus aciditrophicus (strain SB).